The following is a 450-amino-acid chain: Glucose-6-phosphate isomerase (450 aa).

Glutamate 291 serves as the catalytic Proton donor. Active-site residues include histidine 312 and lysine 426.

It belongs to the GPI family.

The protein resides in the cytoplasm. It carries out the reaction alpha-D-glucose 6-phosphate = beta-D-fructose 6-phosphate. It functions in the pathway carbohydrate biosynthesis; gluconeogenesis. It participates in carbohydrate degradation; glycolysis; D-glyceraldehyde 3-phosphate and glycerone phosphate from D-glucose: step 2/4. In terms of biological role, catalyzes the reversible isomerization of glucose-6-phosphate to fructose-6-phosphate. This chain is Glucose-6-phosphate isomerase, found in Clostridium perfringens (strain SM101 / Type A).